The chain runs to 26 residues: Unknown protein 16 (26 aa).

The segment at 1-26 (AINSESGVRSVVPQPCNALPNQGPEK) is disordered.

This Pseudotsuga menziesii (Douglas-fir) protein is Unknown protein 16.